The sequence spans 257 residues: 1-(5-phosphoribosyl)-5-[(5-phosphoribosylamino)methylideneamino] imidazole-4-carboxamide isomerase (257 aa).

Asp8 (proton acceptor) is an active-site residue. Residue Asp129 is the Proton donor of the active site.

The protein belongs to the HisA/HisF family.

It localises to the cytoplasm. It catalyses the reaction 1-(5-phospho-beta-D-ribosyl)-5-[(5-phospho-beta-D-ribosylamino)methylideneamino]imidazole-4-carboxamide = 5-[(5-phospho-1-deoxy-D-ribulos-1-ylimino)methylamino]-1-(5-phospho-beta-D-ribosyl)imidazole-4-carboxamide. The protein operates within amino-acid biosynthesis; L-histidine biosynthesis; L-histidine from 5-phospho-alpha-D-ribose 1-diphosphate: step 4/9. In Cyanothece sp. (strain PCC 7425 / ATCC 29141), this protein is 1-(5-phosphoribosyl)-5-[(5-phosphoribosylamino)methylideneamino] imidazole-4-carboxamide isomerase.